A 517-amino-acid chain; its full sequence is MAYVLTETAAGYALLKASDKKIYKSSSLIEDLNTVEKVTEQFKIHRFEKFSSAANALEEANAIIEGRISDNLKKMLEDVKNDKKATLIVSEAKLGNAINKLGLNFSVVSDAASLDLHRAIKEFLPELLPGLDDSALKQMSLGLAHSMGRHKLKFSADKVDTMIVQAIALLDDLDKELNTYAMRCKEWYGWHFPELAKMITDSVAYARIILTMGIRSNAADTDLSEILPEEAEEQVKSAAEVSMGTEITDIDLENIKALAEQIVDFAAYREQLSNYLSSRMKAIAPNLTALVGELVGARLIAHSGSLTSLAKAPASTIQILGAEKALFRALKTKHDTPKYGLLYHASLVGQASGKNKGKIARVLAAKAAVALRYDSLAEDRDDSGDFGLSVRTKVESRLSALEGRDLRTTAKVIREQPKVDITEARAYNADADAPMADADSDDESETEEEPKKEKKDKKEKKDKKEKKDKKDKKRKREEDDEEEEEDSKKSKKEKKEKKEKKDKKEKKDKKEKKKEKK.

A Nop domain is found at 283–403; sequence IAPNLTALVG…VESRLSALEG (121 aa). The interval 423 to 517 is disordered; sequence EARAYNADAD…DKKEKKKEKK (95 aa). The span at 438-448 shows a compositional bias: acidic residues; the sequence is ADSDDESETEE. Composition is skewed to basic residues over residues 454 to 475 and 489 to 517; these read KKDKKEKKDKKEKKDKKDKKRK and KSKKEKKEKKEKKDKKEKKDKKEKKKEKK. A coiled-coil region spans residues 456-517; it reads DKKEKKDKKE…DKKEKKKEKK (62 aa).

It belongs to the NOP5/NOP56 family.

The protein localises to the nucleus. It localises to the nucleolus. Functionally, required for pre-18S rRNA processing. May bind microtubules. The sequence is that of Nucleolar protein 58 (NOP58) from Debaryomyces hansenii (strain ATCC 36239 / CBS 767 / BCRC 21394 / JCM 1990 / NBRC 0083 / IGC 2968) (Yeast).